Reading from the N-terminus, the 497-residue chain is Di-/tripeptide transporter (497 aa).

Transmembrane regions (helical) follow at residues A3–T23, A26–L46, V57–V77, I84–G104, I119–A139, A155–G175, I199–V219, V227–F247, F294–I314, L321–L341, G372–L392, and I452–I472.

Belongs to the major facilitator superfamily. Proton-dependent oligopeptide transporter (POT/PTR) (TC 2.A.17) family.

The protein localises to the cell membrane. Proton-dependent uptake of di- or tri-peptides. This Lactobacillus helveticus (Lactobacillus suntoryeus) protein is Di-/tripeptide transporter (dtpT).